The primary structure comprises 213 residues: MWLMAKGILGRKLGMSRFFTAEGVAVPVTLIEAGPCTVVQKKTPDTDGYSAVQLGFMEQPAKRVNRPLKGHFGRAGVKPSRFLRELRVADAADYEVGQVLKADLFDVGEIVDVVGTSKGKGFAGGIKRHGFHRGPMGHGSKYHRRPGALAAKGPARVFKGRKLPGRLGGVRVTVQNLEIVKVDPERNLLAVRGAVPGIRGSLVVVKSAVKGNE.

It belongs to the universal ribosomal protein uL3 family. In terms of assembly, part of the 50S ribosomal subunit. Forms a cluster with proteins L14 and L19.

Functionally, one of the primary rRNA binding proteins, it binds directly near the 3'-end of the 23S rRNA, where it nucleates assembly of the 50S subunit. The polypeptide is Large ribosomal subunit protein uL3 (Desulforudis audaxviator (strain MP104C)).